Consider the following 1077-residue polypeptide: Adenylate cyclase type 4 (1077 aa).

The Cytoplasmic segment spans residues 1-28 (MARLFSPRPPPSEDLFYETYYSLSQQYP). 6 helical membrane-spanning segments follow: residues 29 to 50 (LLLL…VAWA), 61 to 80 (FLTT…GLAS), 94 to 117 (GLVW…VSAW), 120 to 138 (VSYF…PLGM), 141 to 162 (AAVA…YLGP), and 170 to 190 (LLPQ…AGVY). The Cytoplasmic portion of the chain corresponds to 191–585 (HKALMERALR…YRLSAIPAFK (395 aa)). Positions 278, 279, and 322 each coordinate Mg(2+). Residues 278 to 283 (DIVGFT), 320 to 322 (LGD), and R366 contribute to the ATP site. Phosphoserine is present on S520. At T536 the chain carries Phosphothreonine. The next 3 membrane-spanning stretches (helical) occupy residues 586-607 (YYEA…LVTN), 611-633 (ALAI…CFSE), and 664-687 (IALG…FFPT). The Extracellular portion of the chain corresponds to 688–714 (SSDCPFQAPNVSSMISNLSWELPGSLP). N697 and N704 each carry an N-linked (GlcNAc...) asparagine glycan. The next 3 membrane-spanning stretches (helical) occupy residues 715-736 (LISV…SLFL), 744-764 (LLLL…SHAW), and 791-807 (MGAI…LVLA). The Cytoplasmic segment spans residues 808–1077 (RQNEYYCRLD…RTGPPSATLG (270 aa)). Residues K925, 1005–1007 (DIW), 1012–1016 (NVASR), and K1052 each bind ATP.

Belongs to the adenylyl cyclase class-4/guanylyl cyclase family. The cofactor is Mg(2+). Mn(2+) serves as cofactor. In terms of tissue distribution, detected in the zona glomerulosa and the zona fasciculata in the adrenal gland (at protein level).

It localises to the cell membrane. The protein resides in the cytoplasm. The catalysed reaction is ATP = 3',5'-cyclic AMP + diphosphate. Activated by forskolin. Insensitive to calcium/calmodulin. Stimulated by GNAS and by the G-protein beta and gamma subunit complex. In terms of biological role, catalyzes the formation of the signaling molecule cAMP in response to G-protein signaling. In Homo sapiens (Human), this protein is Adenylate cyclase type 4 (ADCY4).